The chain runs to 58 residues: Large ribosomal subunit protein uL30 (58 aa).

Belongs to the universal ribosomal protein uL30 family. As to quaternary structure, part of the 50S ribosomal subunit.

This is Large ribosomal subunit protein uL30 from Porphyromonas gingivalis (strain ATCC 33277 / DSM 20709 / CIP 103683 / JCM 12257 / NCTC 11834 / 2561).